The sequence spans 214 residues: Redox-sensing transcriptional repressor Rex (214 aa).

The H-T-H motif DNA-binding region spans 16-55 (IYFRYLNVLKDANKQRVSSTELSEAVQVDSATIRRDFSYF). 90 to 95 (GVGSLG) serves as a coordination point for NAD(+).

Belongs to the transcriptional regulatory Rex family. In terms of assembly, homodimer.

The protein localises to the cytoplasm. Functionally, modulates transcription in response to changes in cellular NADH/NAD(+) redox state. The sequence is that of Redox-sensing transcriptional repressor Rex from Limosilactobacillus reuteri (strain DSM 20016) (Lactobacillus reuteri).